A 234-amino-acid polypeptide reads, in one-letter code: Large ribosomal subunit protein uL1 (234 aa).

It belongs to the universal ribosomal protein uL1 family. As to quaternary structure, part of the 50S ribosomal subunit.

Binds directly to 23S rRNA. The L1 stalk is quite mobile in the ribosome, and is involved in E site tRNA release. Its function is as follows. Protein L1 is also a translational repressor protein, it controls the translation of the L11 operon by binding to its mRNA. The protein is Large ribosomal subunit protein uL1 of Maridesulfovibrio salexigens (strain ATCC 14822 / DSM 2638 / NCIMB 8403 / VKM B-1763) (Desulfovibrio salexigens).